Here is a 381-residue protein sequence, read N- to C-terminus: Homoserine O-succinyltransferase (381 aa).

The AB hydrolase-1 domain occupies 45–360 (NAVLVCHALN…PHGHDAFLLD (316 aa)). Ser-151 (nucleophile) is an active-site residue. Residue Arg-221 participates in substrate binding. Catalysis depends on residues Asp-321 and His-354. Position 355 (Asp-355) interacts with substrate.

This sequence belongs to the AB hydrolase superfamily. MetX family. In terms of assembly, homodimer.

It is found in the cytoplasm. It catalyses the reaction L-homoserine + succinyl-CoA = O-succinyl-L-homoserine + CoA. It functions in the pathway amino-acid biosynthesis; L-methionine biosynthesis via de novo pathway; O-succinyl-L-homoserine from L-homoserine: step 1/1. Functionally, transfers a succinyl group from succinyl-CoA to L-homoserine, forming succinyl-L-homoserine. The protein is Homoserine O-succinyltransferase of Burkholderia cenocepacia (strain ATCC BAA-245 / DSM 16553 / LMG 16656 / NCTC 13227 / J2315 / CF5610) (Burkholderia cepacia (strain J2315)).